Here is a 244-residue protein sequence, read N- to C-terminus: Sperm-egg fusion protein Juno (244 aa).

A signal peptide spans 1-19; it reads MAQWWLILLGLWTVLPSLA. Disulfide bonds link Cys-27/Cys-55, Cys-47/Cys-95, Cys-56/Cys-99, Cys-79/Cys-166, Cys-86/Cys-137, Cys-126/Cys-200, Cys-130/Cys-180, and Cys-143/Cys-160. An important for interaction with IZUMO1 region spans residues 62 to 81; that stretch reads WEAHLDEPLLFNFSMTHCGL. Asn-73 carries N-linked (GlcNAc...) asparagine glycosylation. Positions 223-244 are excised as a propeptide; the sequence is SASAPQLSYSITAFSLCLLLHA.

Belongs to the folate receptor family. As to quaternary structure, monomer. Interacts with IZUMO1; the interaction is direct. IZUMO1 and IZUMO1R/JUNO form a complex with 1:1 stoichiometry. Interacts with FCRL3/MAIA; FCRL3/MAIA replaces IZUMO1R/JUNO as IZUMO1 receptor after sperm-egg adhesion, thereby permitting species-specific gamete fusion. Interacts with WDR54. The protein is rapidly cleaved following fertilization, being only weakly detectable in zona-intact fertilized eggs at telophase II and undetectable at the pronuclear stage. Sheding is probably required to block to polyspermy and ensuring egg fusion with a single sperm. Expressed in the oocyte (at protein level).

It localises to the cell membrane. The protein resides in the cell projection. Its subcellular location is the microvillus membrane. Functionally, receptor for IZUMO1 present at the cell surface of oocytes (oolemma), which is essential for species-specific gamete recognition and fertilization. The IZUMO1:IZUMO1R/JUNO interaction is a necessary adhesion event between sperm and egg that is required for fertilization but is not sufficient for cell fusion. The ligand-receptor interaction probably does not act as a membrane 'fusogen'. Does not bind folate. This Rattus norvegicus (Rat) protein is Sperm-egg fusion protein Juno (Izumo1r).